Here is a 419-residue protein sequence, read N- to C-terminus: UPF0229 protein Tbd_1233 (419 aa).

Positions 85–108 are disordered; sequence GDRIDRPAGEGGGGSGGSPDGEGM. The segment covering 93–104 has biased composition (gly residues); that stretch reads GEGGGGSGGSPD.

It belongs to the UPF0229 family.

The polypeptide is UPF0229 protein Tbd_1233 (Thiobacillus denitrificans (strain ATCC 25259 / T1)).